We begin with the raw amino-acid sequence, 500 residues long: 4-aminobutyrate aminotransferase, mitochondrial (500 aa).

A mitochondrion-targeting transit peptide spans 1–28 (MASMLLAQRLACSFQHSYRLLVPGSRHI). Residue C163 participates in [2Fe-2S] cluster binding. 164-165 (GS) contributes to the pyridoxal 5'-phosphate binding site. C166 lines the [2Fe-2S] cluster pocket. R220 serves as a coordination point for substrate. K231 is subject to N6-succinyllysine. K252 is subject to N6-acetyllysine; alternate. N6-succinyllysine; alternate is present on K252. N6-acetyllysine occurs at positions 279 and 318. K357 carries the N6-(pyridoxal phosphate)lysine modification. T381 contributes to the pyridoxal 5'-phosphate binding site. K413 carries the post-translational modification N6-acetyllysine; alternate. N6-succinyllysine; alternate is present on K413. K452 and K470 each carry N6-acetyllysine.

It belongs to the class-III pyridoxal-phosphate-dependent aminotransferase family. Homodimer; disulfide-linked. The cofactor is pyridoxal 5'-phosphate. Requires [2Fe-2S] cluster as cofactor. As to expression, liver &gt; pancreas &gt; brain &gt; kidney &gt; heart &gt; placenta.

It localises to the mitochondrion matrix. It catalyses the reaction 4-aminobutanoate + 2-oxoglutarate = succinate semialdehyde + L-glutamate. The catalysed reaction is (S)-3-amino-2-methylpropanoate + 2-oxoglutarate = 2-methyl-3-oxopropanoate + L-glutamate. Its function is as follows. Catalyzes the conversion of gamma-aminobutyrate and L-beta-aminoisobutyrate to succinate semialdehyde and methylmalonate semialdehyde, respectively. Can also convert delta-aminovalerate and beta-alanine. In Homo sapiens (Human), this protein is 4-aminobutyrate aminotransferase, mitochondrial.